Consider the following 490-residue polypeptide: Cytochrome P450 2C50 (490 aa).

S127 carries the phosphoserine modification. 2 positions are modified to N6-acetyllysine: K249 and K375. A heme-binding site is contributed by C435.

The protein belongs to the cytochrome P450 family. Heme is required as a cofactor. In terms of tissue distribution, expressed in heart and liver.

The protein localises to the endoplasmic reticulum membrane. It is found in the microsome membrane. It carries out the reaction an organic molecule + reduced [NADPH--hemoprotein reductase] + O2 = an alcohol + oxidized [NADPH--hemoprotein reductase] + H2O + H(+). Functionally, metabolizes arachidonic acid to several midchain and omega-terminal hydroxyeicosatetraenoic acids (HETE). In Mus musculus (Mouse), this protein is Cytochrome P450 2C50.